The sequence spans 175 residues: Ribosome maturation factor RimM (175 aa).

Residues 94–166 (SDSWYEHELI…FIRLVPPGGL (73 aa)) form the PRC barrel domain.

It belongs to the RimM family. Binds ribosomal protein uS19.

It is found in the cytoplasm. In terms of biological role, an accessory protein needed during the final step in the assembly of 30S ribosomal subunit, possibly for assembly of the head region. Essential for efficient processing of 16S rRNA. May be needed both before and after RbfA during the maturation of 16S rRNA. It has affinity for free ribosomal 30S subunits but not for 70S ribosomes. This Renibacterium salmoninarum (strain ATCC 33209 / DSM 20767 / JCM 11484 / NBRC 15589 / NCIMB 2235) protein is Ribosome maturation factor RimM.